The following is a 268-amino-acid chain: 4-hydroxy-tetrahydrodipicolinate reductase (268 aa).

NAD(+) contacts are provided by residues 10-15 (GASGRM) and D36. Position 37 (R37) interacts with NADP(+). NAD(+) contacts are provided by residues 99-101 (GTT) and 123-126 (SANM). Residue H156 is the Proton donor/acceptor of the active site. H157 provides a ligand contact to (S)-2,3,4,5-tetrahydrodipicolinate. The active-site Proton donor is the K160. A (S)-2,3,4,5-tetrahydrodipicolinate-binding site is contributed by 166-167 (GT).

This sequence belongs to the DapB family.

It localises to the cytoplasm. It carries out the reaction (S)-2,3,4,5-tetrahydrodipicolinate + NAD(+) + H2O = (2S,4S)-4-hydroxy-2,3,4,5-tetrahydrodipicolinate + NADH + H(+). The enzyme catalyses (S)-2,3,4,5-tetrahydrodipicolinate + NADP(+) + H2O = (2S,4S)-4-hydroxy-2,3,4,5-tetrahydrodipicolinate + NADPH + H(+). It participates in amino-acid biosynthesis; L-lysine biosynthesis via DAP pathway; (S)-tetrahydrodipicolinate from L-aspartate: step 4/4. Functionally, catalyzes the conversion of 4-hydroxy-tetrahydrodipicolinate (HTPA) to tetrahydrodipicolinate. This Burkholderia pseudomallei (strain 1710b) protein is 4-hydroxy-tetrahydrodipicolinate reductase.